The sequence spans 184 residues: Ribosome maturation factor RimM (184 aa).

Residues 106–184 (PGDYYWYQLE…RMIVDWDPEF (79 aa)) enclose the PRC barrel domain.

Belongs to the RimM family. As to quaternary structure, binds ribosomal protein uS19.

Its subcellular location is the cytoplasm. In terms of biological role, an accessory protein needed during the final step in the assembly of 30S ribosomal subunit, possibly for assembly of the head region. Essential for efficient processing of 16S rRNA. May be needed both before and after RbfA during the maturation of 16S rRNA. It has affinity for free ribosomal 30S subunits but not for 70S ribosomes. This is Ribosome maturation factor RimM from Chromohalobacter salexigens (strain ATCC BAA-138 / DSM 3043 / CIP 106854 / NCIMB 13768 / 1H11).